Here is a 449-residue protein sequence, read N- to C-terminus: Mitochondrial distribution and morphology protein 10 (449 aa).

Disordered regions lie at residues 215 to 244 (GPSE…DEED) and 282 to 307 (DATP…GAPS). The span at 285-301 (PPSFQLPSSSPTQPSLL) shows a compositional bias: low complexity.

The protein belongs to the MDM10 family. Component of the ER-mitochondria encounter structure (ERMES) or MDM complex, composed of MMM1, MDM10, MDM12 and MDM34. Associates with the mitochondrial outer membrane sorting assembly machinery SAM(core) complex.

Its subcellular location is the mitochondrion outer membrane. Its function is as follows. Component of the ERMES/MDM complex, which serves as a molecular tether to connect the endoplasmic reticulum and mitochondria. Components of this complex are involved in the control of mitochondrial shape and protein biogenesis and may function in phospholipid exchange. MDM10 is involved in the late assembly steps of the general translocase of the mitochondrial outer membrane (TOM complex). Functions in the TOM40-specific route of the assembly of outer membrane beta-barrel proteins, including the association of TOM40 with the receptor TOM22 and small TOM proteins. Can associate with the SAM(core) complex as well as the MDM12-MMM1 complex, both involved in late steps of the major beta-barrel assembly pathway, that is responsible for biogenesis of all outer membrane beta-barrel proteins. May act as a switch that shuttles between both complexes and channels precursor proteins into the TOM40-specific pathway. Plays a role in mitochondrial morphology and in the inheritance of mitochondria. The polypeptide is Mitochondrial distribution and morphology protein 10 (Postia placenta (strain ATCC 44394 / Madison 698-R) (Brown rot fungus)).